The chain runs to 274 residues: Nitrogenase iron protein (274 aa).

8-15 (GKGGIGKS) serves as a coordination point for ATP. Position 94 (Cys94) interacts with [4Fe-4S] cluster. Arg97 is modified (ADP-ribosylarginine; by dinitrogenase reductase ADP-ribosyltransferase). Cys131 lines the [4Fe-4S] cluster pocket.

It belongs to the NifH/BchL/ChlL family. In terms of assembly, homodimer. Requires [4Fe-4S] cluster as cofactor. In terms of processing, the reversible ADP-ribosylation of Arg-97 inactivates the nitrogenase reductase and regulates nitrogenase activity.

The enzyme catalyses N2 + 8 reduced [2Fe-2S]-[ferredoxin] + 16 ATP + 16 H2O = H2 + 8 oxidized [2Fe-2S]-[ferredoxin] + 2 NH4(+) + 16 ADP + 16 phosphate + 6 H(+). In terms of biological role, the key enzymatic reactions in nitrogen fixation are catalyzed by the nitrogenase complex, which has 2 components: the iron protein and the molybdenum-iron protein. The sequence is that of Nitrogenase iron protein from Azobacteroides pseudotrichonymphae genomovar. CFP2.